An 847-amino-acid chain; its full sequence is Putative disease resistance RPP13-like protein 2 (847 aa).

A coiled-coil region spans residues 26-42 (GVKDDLEELKTELTCIQ). Residues 142–446 (STSRVREVRR…AEGFIQEDEE (305 aa)) form the NB-ARC domain. 191 to 198 (GMEGLGKT) provides a ligand contact to ATP. LRR repeat units follow at residues 587–610 (LVHLRYLGIADTVVNNLPDFISNL), 612–634 (FLQTLDASGNSFERMTDLSNLTS), 703–726 (LKNLRVLKIEVVSFSLFSEETVRF), 749–774 (FPSLESLTLVTNLQEDPMPTLQKLQR), and 807–830 (IKRLDELEIEEEAMPCLMKLNLDN).

The protein belongs to the disease resistance NB-LRR family. RPP13 subfamily.

Potential disease resistance protein. The sequence is that of Putative disease resistance RPP13-like protein 2 (RPP13L2) from Arabidopsis thaliana (Mouse-ear cress).